A 552-amino-acid polypeptide reads, in one-letter code: CTP synthase (552 aa).

The interval 1–270 (MTKYVFVTGG…DRIICEELKL (270 aa)) is amidoligase domain. Ser13 provides a ligand contact to CTP. UTP is bound at residue Ser13. Residues 14–19 (SLGKGI) and Asp71 each bind ATP. Mg(2+) is bound by residues Asp71 and Glu144. Residues 151–153 (DIE), 191–196 (KTKPTQ), and Lys227 contribute to the CTP site. Residues 191–196 (KTKPTQ) and Lys227 contribute to the UTP site. A Glutamine amidotransferase type-1 domain is found at 295 to 547 (TIGMVGKYVD…VEAAFANKQA (253 aa)). Residue Gly356 participates in L-glutamine binding. The active-site Nucleophile; for glutamine hydrolysis is the Cys383. L-glutamine contacts are provided by residues 384-387 (LGMQ), Glu407, and Arg473. Residues His520 and Glu522 contribute to the active site.

Belongs to the CTP synthase family. Homotetramer.

It catalyses the reaction UTP + L-glutamine + ATP + H2O = CTP + L-glutamate + ADP + phosphate + 2 H(+). The enzyme catalyses L-glutamine + H2O = L-glutamate + NH4(+). It carries out the reaction UTP + NH4(+) + ATP = CTP + ADP + phosphate + 2 H(+). It participates in pyrimidine metabolism; CTP biosynthesis via de novo pathway; CTP from UDP: step 2/2. Allosterically activated by GTP, when glutamine is the substrate; GTP has no effect on the reaction when ammonia is the substrate. The allosteric effector GTP functions by stabilizing the protein conformation that binds the tetrahedral intermediate(s) formed during glutamine hydrolysis. Inhibited by the product CTP, via allosteric rather than competitive inhibition. In terms of biological role, catalyzes the ATP-dependent amination of UTP to CTP with either L-glutamine or ammonia as the source of nitrogen. Regulates intracellular CTP levels through interactions with the four ribonucleotide triphosphates. This is CTP synthase from Burkholderia ambifaria (strain ATCC BAA-244 / DSM 16087 / CCUG 44356 / LMG 19182 / AMMD) (Burkholderia cepacia (strain AMMD)).